Here is a 528-residue protein sequence, read N- to C-terminus: NAC domain-containing protein 13 (528 aa).

The NAC domain maps to 10–160 (LAPGFRFHPT…AYVLYKIYKK (151 aa)). The DNA-binding element occupies 107–166 (VGEKKTLVFHRGRAPNGERTNWVMHEYTLHKEELKRCGGEDVKDAYVLYKIYKKSGSGPK). The interval 388 to 419 (EAPGTGDSSEFLNPVPSGISTTNEDDPSKDES) is disordered. The chain crosses the membrane as a helical span at residues 499–519 (FFCLSIIGALCALFWVIIGTM).

As to quaternary structure, interacts with RCD1. As to expression, expressed in roots, rosette leaves, shoot apex, stems and flowers.

It localises to the endoplasmic reticulum membrane. The protein localises to the nucleus. Transcriptional activator activated by proteolytic cleavage through regulated intramembrane proteolysis (RIP). Involved in oxidative stress tolerance by mediating regulation of mitochondrial retrograde signaling during mitochondrial dysfunction. Interacts directly with the mitochondrial dysfunction DNA consensus motif 5'-CTTGNNNNNCA[AC]G-3', a cis-regulatory elements of several mitochondrial retrograde regulation-induced genes, and triggers increased oxidative stress tolerance. This is NAC domain-containing protein 13 from Arabidopsis thaliana (Mouse-ear cress).